The primary structure comprises 234 residues: NLP effector protein Pc576423 (234 aa).

Residues 1–18 (MNLRAIAVTFATFAGANA) form the signal peptide. 2 N-linked (GlcNAc...) asparagine glycosylation sites follow: N35 and N66. A Hepta-peptide GHRHDWE motif motif is present at residues 119–125 (GHRHDWE).

It belongs to the Necrosis inducing protein (NPP1) family.

It is found in the secreted. Its function is as follows. Secreted effector that contributes strongly to virulence during infection by P.capsici. The protein is NLP effector protein Pc576423 of Phytophthora capsici.